A 378-amino-acid polypeptide reads, in one-letter code: Chlorophyll synthase, chloroplastic (378 aa).

The N-terminal 45 residues, 1–45 (MATSHPLAAAAATSSSSATFRPPLRFLSSPPSSLTLNRRRSFPVV), are a transit peptide targeting the chloroplast. The next 7 membrane-spanning stretches (helical) occupy residues 173-193 (VITQIWVLLLGGLGLGALLDI), 199-219 (FPIIFYLALGGSLLSYIYSAP), 232-252 (FALGASYIGLPWWAGQALFGT), 257-277 (IVVLTCLYSIAGLGIAIVNDF), 302-322 (WICVGAIDITQLSVAAYLLST), 327-347 (YALALLGLTIPQVILQFQYFL), and 357-377 (YQASAQPFFVFGLLVTALATS).

Belongs to the UbiA prenyltransferase family. Chlorophyll synthase subfamily. Requires Mg(2+) as cofactor. Zn(2+) is required as a cofactor. Mn(2+) serves as cofactor.

It is found in the plastid. The protein localises to the chloroplast membrane. The catalysed reaction is phytyl diphosphate + chlorophyllide a + H(+) = chlorophyll a + diphosphate. With respect to regulation, inhibited by N-phenylmaleimide (NPM) and diacetyl. Functionally, involved in one of the last steps of the biosynthesis of chlorophyll a. Catalyzes the esterification of chlorophillide a with either geranylgeranyldiphosphate (GGPP) or phytyldiphosphate (PhyPP). May also use with a lower efficiency the monophosphates GGMP and PhyMP, but not the non-phosphorylated alcohols geranylgeraniol and phytol. The tetraprenyl diphosphate must bind to the enzyme as the first substrate and esterification occurs when this pre-loaded enzyme meets the second substrate, chlorophyllide. In Avena sativa (Oat), this protein is Chlorophyll synthase, chloroplastic (CHLG).